Reading from the N-terminus, the 314-residue chain is Phospholipid phosphatase-related protein type 5 (314 aa).

Helical transmembrane passes span 5 to 25, 61 to 81, 120 to 140, 194 to 214, 223 to 243, and 250 to 270; these read FSLTIMLYFQMVIMAGTVMLA, IPPVLLLSLVTGVPVLVIIVG, FLGIYTFGLFATDIFVNAGQV, AALSVYAALYLAMYITSTIKA, VLCLGLMCLAFLTGINRVAEY, and VIAGFLIGISIAVFLVVCVVN.

This sequence belongs to the PA-phosphatase related phosphoesterase family.

It localises to the cell membrane. Induces filopodia formation and promotes neurite growth. This Xenopus laevis (African clawed frog) protein is Phospholipid phosphatase-related protein type 5.